We begin with the raw amino-acid sequence, 133 residues long: MLPAPHRLRDRRAFQALYQGGQRRSGAGLTLLFQPMPAGCEGIPSQVGLVIGRKVSKSAVKRNRLRRQLREILRPLCPNLKPGYRLLFISKANLLTYRWPELRAEVHRLLQKADLLVSTDVDSTGADSDAKPS.

The protein belongs to the RnpA family. Consists of a catalytic RNA component (M1 or rnpB) and a protein subunit.

It carries out the reaction Endonucleolytic cleavage of RNA, removing 5'-extranucleotides from tRNA precursor.. RNaseP catalyzes the removal of the 5'-leader sequence from pre-tRNA to produce the mature 5'-terminus. It can also cleave other RNA substrates such as 4.5S RNA. The protein component plays an auxiliary but essential role in vivo by binding to the 5'-leader sequence and broadening the substrate specificity of the ribozyme. This Synechococcus sp. (strain JA-2-3B'a(2-13)) (Cyanobacteria bacterium Yellowstone B-Prime) protein is Ribonuclease P protein component.